A 254-amino-acid polypeptide reads, in one-letter code: Galactitol 2-dehydrogenase (L-tagatose-forming) (254 aa).

Residues 21–23, aspartate 42, 66–67, tyrosine 159, lysine 163, and 192–194 each bind NAD(+); these read SGI, DV, and VAT. The active-site Proton acceptor is tyrosine 159. Tryptophan 254 lines the Mg(2+) pocket.

Belongs to the short-chain dehydrogenases/reductases (SDR) family. In terms of assembly, homotetramer. The cofactor is a divalent metal cation.

The catalysed reaction is galactitol + NAD(+) = keto-L-tagatose + NADH + H(+). With respect to regulation, inhibited by the chelating agents EDTA and alpha,alpha'-dipyridyl. Inhibited by Zn(2+) and Fe(2+). In terms of biological role, catalyzes the interconversion of galactitol to the rare sugar L-tagatose. Shows activity with a wide range of substrates, and catalyzes the oxidation of a variety of polyvalent aliphatic alcohols and polyols to the corresponding ketones and ketoses, respectively, and in the reverse reaction, it reduces ketones with high stereoselectivity yielding the corresponding S-configurated alcohols. Shows high activity with D-threitol, xylitol, 1,2-hexanediol, 1,2-pentanediol, 2-hexanol, L-erythrulose, D-ribulose and acetoin. Specific for NAD(+). The protein is Galactitol 2-dehydrogenase (L-tagatose-forming) of Cereibacter sphaeroides (Rhodobacter sphaeroides).